The chain runs to 340 residues: Cathepsin B (340 aa).

The first 17 residues, 1–17 (MSWSRSILCLLGAFANA), serve as a signal peptide directing secretion. A propeptide spans 18-79 (RSIPYYPPLS…ERVDFAEDMD (62 aa)) (activation peptide). N-linked (GlcNAc...) asparagine glycosylation is present at Asn-38. 6 disulfides stabilise this stretch: Cys-93/Cys-122, Cys-105/Cys-150, Cys-141/Cys-208, Cys-142/Cys-146, Cys-179/Cys-212, and Cys-187/Cys-198. The active site involves Cys-108. A glycan (N-linked (GlcNAc...) asparagine) is linked at Asn-192. Active-site residues include His-279 and Asn-299.

It belongs to the peptidase C1 family. As to quaternary structure, dimer of a heavy chain and a light chain cross-linked by a disulfide bond.

The protein localises to the lysosome. The catalysed reaction is Hydrolysis of proteins with broad specificity for peptide bonds. Preferentially cleaves -Arg-Arg-|-Xaa bonds in small molecule substrates (thus differing from cathepsin L). In addition to being an endopeptidase, shows peptidyl-dipeptidase activity, liberating C-terminal dipeptides.. Functionally, thiol protease which is believed to participate in intracellular degradation and turnover of proteins. Has also been implicated in tumor invasion and metastasis. In Gallus gallus (Chicken), this protein is Cathepsin B (CTSB).